A 545-amino-acid polypeptide reads, in one-letter code: O-phosphoserine--tRNA(Cys) ligase (545 aa).

Substrate contacts are provided by residues 189–191 (HMT), 234–236 (SAS), 276–277 (YY), and Asn328.

This sequence belongs to the class-II aminoacyl-tRNA synthetase family. O-phosphoseryl-tRNA(Cys) synthetase subfamily. As to quaternary structure, homotetramer. Interacts with SepCysS.

It catalyses the reaction tRNA(Cys) + O-phospho-L-serine + ATP = O-phospho-L-seryl-tRNA(Cys) + AMP + diphosphate. Its function is as follows. Catalyzes the attachment of O-phosphoserine (Sep) to tRNA(Cys). The polypeptide is O-phosphoserine--tRNA(Cys) ligase (Methanothrix thermoacetophila (strain DSM 6194 / JCM 14653 / NBRC 101360 / PT) (Methanosaeta thermophila)).